The sequence spans 294 residues: MFSGFVGPDDGEPTSDASETVQISSLALLKMLKHGRAGIPLEVMGLMLGEFVDEYTVKVVDVFAMPQSGTNVTVESVDPIFQMEMMSILKATGRHETVVGWYHSHPGFGCWLSTVDISTQQSFEKLCKRAVAVVVDPIQSVKGKVVIDAFRLIDNQLGVLGGEPRQVTSNIGYLKTPTLISIIHGLNKHYYSFNITCRKNDFEQKMLLNLHRKTWADNLKLGDVRSKREEALKLIESYGKAFEEEKNLAGKNPDMAKVGRIDYRRRLLEKCEESIMENTIYSLLYSIHRYIFTQ.

In terms of domain architecture, MPN spans 21 to 156; the sequence is VQISSLALLK…IDAFRLIDNQ (136 aa). His-103, His-105, and Asp-116 together coordinate Zn(2+). A JAMM motif motif is present at residues 103 to 116; the sequence is HSHPGFGCWLSTVD.

Belongs to the peptidase M67A family. The 26S proteasome consists of a 20S proteasome core and two 19S regulatory subunits. The 20S proteasome core is composed of 28 subunits that are arranged in four stacked rings, resulting in a barrel-shaped structure. The two end rings are each formed by seven alpha subunits, and the two central rings are each formed by seven beta subunits. The catalytic chamber with the active sites is on the inside of the barrel.

The protein localises to the cytoplasm. The protein resides in the nucleus. Functionally, acts as a regulatory subunit of the 26S proteasome which degrades poly-ubiquitinated proteins in the cytoplasm and in the nucleus. It is essential for the regulated turnover of proteins and for the removal of misfolded proteins. The proteasome is a multicatalytic proteinase complex that is characterized by its ability to cleave peptides with Arg, Phe, Tyr, Leu, and Glu adjacent to the leaving group at neutral or slightly basic pH. This Encephalitozoon cuniculi (strain GB-M1) (Microsporidian parasite) protein is 26S proteasome regulatory subunit RPN11 (RPN11).